We begin with the raw amino-acid sequence, 847 residues long: Aryl hydrocarbon receptor (847 aa).

A disordered region spans residues 1 to 39 (MNGGGANITYASRKRRKPVQKTVKPIPAEGIKSNPSKRH). 2 consecutive short sequence motifs (nuclear localization signal) follow at residues 13 to 16 (RKRR) and 37 to 42 (KRHRDR). Residues 27–80 (PAEGIKSNPSKRHRDRLNTELDRLASLLPFPQDVINKLDKLSVLRLSVSYLRAK) enclose the bHLH domain. Positions 38-66 (RHRDRLNTELDRLASLLPFPQDVINKLDK) are DNA-binding. 3 required for maintaining the overall integrity of the AHR:ARNT heterodimer and its transcriptional activity regions span residues 50–82 (LASLLPFPQDVINKLDKLSVLRLSVSYLRAKSF), 117–125 (LLQALNGFV), and 264–266 (FAI). The short motif at 64–72 (LDKLSVLRL) is the Nuclear export signal element. Residues 120–173 (ALNGFVLVVTVDALVFYASSTIQDYLGFQQSDVIHQSVYELIHTEDRAEFQRQL) enclose the PAS 1 domain. Positions 281–336 (KNFIFRTKHKLDFTPTGCDAKGQIVLGYTEAELCMRGSGYQFIHAADMLYCAESHI) constitute a PAS 2 domain. The 39-residue stretch at 346 to 384 (LAVFRLLTKDNRWAWVQSNARFIYKNGRPDFIIATQRPL) folds into the PAC domain. Disordered stretches follow at residues 430–452 (KSGTCGKDSATKPTPSKDSVHPS) and 825–847 (HLPPLHHPSEARPFPDLASGRLL). Positions 440 to 452 (TKPTPSKDSVHPS) are enriched in polar residues.

As to quaternary structure, homodimer. Heterodimer; efficient DNA binding requires dimerization with another bHLH protein. Binds MYBBP1A. Interacts with coactivators including SRC-1, RIP140 and NOCA7, and with the corepressor SMRT. Interacts with NEDD8 and IVNS1ABP. Interacts with BMAL1. Interacts with HSP90AB1. Interacts with ARNT; the heterodimer ARNT:AHR binds to core DNA sequence 5'-TGCGTG-3' within the dioxin response element (DRE) of target gene promoters and activates their transcription. Interacts with TIPARP; leading to mono-ADP-ribosylation of AHR and subsequent inhibition of AHR. Post-translationally, mono-ADP-ribosylated, leading to inhibit transcription activator activity of AHR.

It is found in the cytoplasm. The protein resides in the nucleus. In terms of biological role, ligand-activated transcription factor that enables cells to adapt to changing conditions by sensing compounds from the environment, diet, microbiome and cellular metabolism, and which plays important roles in development, immunity and cancer. Upon ligand binding, translocates into the nucleus, where it heterodimerizes with ARNT and induces transcription by binding to xenobiotic response elements (XRE). Regulates a variety of biological processes, including angiogenesis, hematopoiesis, drug and lipid metabolism, cell motility and immune modulation. Xenobiotics can act as ligands: upon xenobiotic-binding, activates the expression of multiple phase I and II xenobiotic chemical metabolizing enzyme genes (such as the CYP1A1 gene). Mediates biochemical and toxic effects of halogenated aromatic hydrocarbons. Next to xenobiotics, natural ligands derived from plants, microbiota, and endogenous metabolism are potent AHR agonists. Tryptophan (Trp) derivatives constitute an important class of endogenous AHR ligands. Acts as a negative regulator of anti-tumor immunity: indoles and kynurenic acid generated by Trp catabolism act as ligand and activate AHR, thereby promoting AHR-driven cancer cell motility and suppressing adaptive immunity. Regulates the circadian clock by inhibiting the basal and circadian expression of the core circadian component PER1. Inhibits PER1 by repressing the CLOCK-BMAL1 heterodimer mediated transcriptional activation of PER1. The heterodimer ARNT:AHR binds to core DNA sequence 5'-TGCGTG-3' within the dioxin response element (DRE) of target gene promoters and activates their transcription. This Oryctolagus cuniculus (Rabbit) protein is Aryl hydrocarbon receptor (AHR).